We begin with the raw amino-acid sequence, 5376 residues long: Zonadhesin (5376 aa).

An N-terminal signal peptide occupies residues 1 to 17 (MALPVWTLMLLVGAAWG). Residues 18 to 5310 (QEQVPAWRPN…TTRKKIEASS (5293 aa)) are Extracellular-facing. 3 MAM domains span residues 45–210 (SKCD…TCNQ), 215–374 (QMCT…PCGE), and 377–542 (PQCD…PCRV). Residues N339 and N499 are each glycosylated (N-linked (GlcNAc...) asparagine). The tract at residues 547–1170 (EIPSSPLLPP…PTTGVSTTES (624 aa)) is 80 X heptapeptide repeats (approximate) (mucin-like domain). Disordered regions lie at residues 553 to 579 (LLPP…TKAT) and 1037 to 1113 (TVPP…TVST). The span at 1052–1113 (TEVTTTPPEE…IASEETTVST (62 aa)) shows a compositional bias: low complexity. The 50-residue stretch at 1171-1220 (CPPNAHIELCACPASCESPKPSCQPPCIPGCVCNPGFLFSNNQCINESSC) folds into the TIL 1 domain. N1216, N1239, and N1314 each carry an N-linked (GlcNAc...) asparagine glycan. The VWFC 1 domain maps to 1227 to 1275 (KHYKPGEEWFTPNCTERCRCLPGSLMECQISQCGTHTVCQLKSDQYQCE). In terms of domain architecture, VWFD 1 spans 1280 to 1462 (ATCLVYGDLH…DKDWVSSRCQ (183 aa)). 2 disulfides stabilise this stretch: C1282-C1417 and C1304-C1461. Positions 1555–1608 (CPKNSRYSLCAKPCPETCHPISTTQHCSDKCVEGCECDPGFILSGSECVPSSQC) constitute a TIL 2 domain. A VWFC 2 domain is found at 1609-1664 (GCTSFQGRYFKLQEQWFNPDCKEICTCESHNHILCKPWKCKAQEACSYKNGVLGCH). A VWFD 2 domain is found at 1669-1849 (ATCMVSGDPH…ILEASDPGCF (181 aa)). Disulfide bonds link C1671/C1809 and C1693/C1848. Residues N1814, N1908, and N1933 are each glycosylated (N-linked (GlcNAc...) asparagine). In terms of domain architecture, TIL 3 spans 1941–1995 (CPPRSSYNPCANSCPATCLTLSTPRDCPTLPCVEGCECQSGHILSGTTCVPLRQC). The 57-residue stretch at 1996 to 2052 (GCSDQDGSYHLLGESWYTEKTCTTLCTCSAHSNITCSPTACKANHVCLRQEGLLRCA) folds into the VWFC 3 domain. N-linked (GlcNAc...) asparagine glycans are attached at residues N2028, N2111, N2142, and N2332. Residues 2056-2239 (GECRISEDSQ…KDKSMDPNCQ (184 aa)) form the VWFD 3 domain. 2 cysteine pairs are disulfide-bonded: C2058/C2200 and C2080/C2238. The 59-residue stretch at 2340–2398 (CPAHSHYTNCLPSCPPSCLDPDSRCEGSGHKVPATCREGCICQPDYVLLNDKCVLRSHC) folds into the TIL 4 domain. The VWFC 4 domain occupies 2399-2454 (GCKDAQGVFIPAGKTWISEDCTQSCTCMKGSMRCWDFQCPPGTYCKNSNDGSSNCV). A TIL 5 domain is found at 2460-2518 (CPAHSKFTDCLPPCHPSCSDPDGHCEGISTNAHSNCKEGCVCQPGYVLRNDKCVLRIEC). In terms of domain architecture, VWFC 5 spans 2519–2574 (GCQHTQGGFIPAGKNWTSRGCSQSCDCMEGVIRCQNFQCPSGTYCQDIEDGTSNCA). N2533 and N2575 each carry an N-linked (GlcNAc...) asparagine glycan. A TIL 6 domain is found at 2580–2638 (CPAHSSFTNCLPPCQPSCSDPEGHCGGSTTKAPSACQEGCVCEPDYVVLNNKCVPRIEC). Residues 2639–2694 (GCKDAQGVLIPADKIWINKGCTQTCACVTGTIHCRDFQCPSGTYCKDIKDDASNCT) form the VWFC 6 domain. An N-linked (GlcNAc...) asparagine glycan is attached at N2692. The region spanning 2700–2758 (CPDHSLYTHCLPSCLLSCSDPDGLCRGTSPEAPSTCKEGCVCDPDYVLSNDKCVLRIEC) is the TIL 7 domain. One can recognise a VWFC 7 domain in the interval 2759-2814 (GCKDAQGVLIPAGKTWINRGCTQSCSCMGGAIQCQNFKCPSEAYCQDMEDGNSNCT). Residue N2812 is glycosylated (N-linked (GlcNAc...) asparagine). Residues 2820–2878 (CPAHSHYTNCLPTCQPSCSDPDGHCEGSSTKAPSACKEGCVCEPDYVMLNNKCVPRIEC) enclose the TIL 8 domain. The VWFC 8 domain occupies 2879 to 2934 (GCKDTQGVLIPADKTWINRGCTQSCTCRGGAIQCQKYHCSSGTYCKDMEDDSSSCA). The TIL 9 domain maps to 2940–2998 (CPAHSHFTNCLPPCQPSCLDSEGHCEGSTTKAPSACQEGCVCEPDYVVLNNKCVPRIEC). Residues 2999 to 3054 (GCKDAQGVLIPADKTWINRGCTQSCTCKGGAIQCQKFQCPSETYCKDIEDGNSNCT) enclose the VWFC 9 domain. Residues N3052, N3065, N3144, and N3172 are each glycosylated (N-linked (GlcNAc...) asparagine). The 59-residue stretch at 3060 to 3118 (CPANSNFTSCLPSCQPSCSNTDVHCEGSSPNTLSSCREGCVCQSGYVLHNDKCILRNQC) folds into the TIL 10 domain. A VWFC 10 domain is found at 3119–3174 (GCKDAQGALIPEGKTWITSGCTQSCNCTGGAIQCQNFQCPLKTYCKDLKDGSSNCT). The 59-residue stretch at 3180–3238 (CPAHSRYTNCLPSCPPLCLDPEGLCEGTSPKVPSTCREGCICQPGYLMHKNKCVLRIFC) folds into the TIL 11 domain. A VWFC 11 domain is found at 3239 to 3294 (GCKNTQGAFISADKTWISRGCTQSCTCPAGAIHCRNFKCPSGTYCKNGDNGSSNCT). Residues N3288 and N3292 are each glycosylated (N-linked (GlcNAc...) asparagine). Residues 3300 to 3355 (CPTNSQFTDCLPSCVPSCSNRCEVTSPSVPSSCREGCLCNHGFVFSEDKCVPRTQC) enclose the TIL 12 domain. The VWFC 12 domain maps to 3356-3411 (GCKDARGAIIPAGKTWTSKGCTQSCACVEGNIQCQNFQCPPETYCKDNSEGSSTCT). The region spanning 3417–3475 (CPAHTQYTSCLPSCLPSCLDPEGLCKDISPKVPSTCKEGCVCQSGYVLNSDKCVLRAEC) is the TIL 13 domain. The region spanning 3476 to 3531 (DCKDAQGALIPAGKTWTSPGCTQSCACMGGAVQCQSSQCPPGTYCKDNEDGNSNCA) is the VWFC 13 domain. Positions 3537–3595 (CPAHSLFTNCLPPCLPSCLDPDGLCKGASPKVPSTCKEGCICQSGYVLSNNKCLLRNRC) constitute a TIL 14 domain. The VWFC 14 domain occupies 3596-3651 (GCKDAHGALIPEDKTWVSRGCTQSCVCTGGSIQCLSSQCPPGAYCKDNEDGSSNCA). In terms of domain architecture, TIL 15 spans 3657–3715 (CPANSHYTDCFPPCPPSCSDPEGHCEASGPRVLSTCREGCLCNPGFVLDRDKCVPRVEC). In terms of domain architecture, VWFC 15 spans 3716-3771 (GCKDAQGALIPSGKTWTSPGCTQSCACMGGVVQCQSSQCPPGTYCKDNEDGNSNCA). Residues 3777–3835 (CPTHSNYTDCLPFCLPSCLDPSALCGGTSPKGPSTCKEGCVCQPGYVLDKDKCILKIEC) form the TIL 16 domain. N3782 is a glycosylation site (N-linked (GlcNAc...) asparagine). The VWFC 16 domain occupies 3836–3891 (GCRDTQGAVIPAGKTWLSTGCIQSCACVEGTIQCQNFQCPPGTYCNHNNNCAKIPL). The TIL 17 domain maps to 3893–3951 (CPAHSHFTSCLPSCPPSCANLDGSCEQTSPKVPSTCKEGCLCQPGYFLNNGKCVLQTHC). Residues 3952–4007 (DCKDAEGGLVPAGKTWTSKDCTQSCACTGGAVQCQNFQCPLGTYCKDSGDGSSNCT) form the VWFC 17 domain. N-linked (GlcNAc...) asparagine glycosylation occurs at N4005. One can recognise a TIL 18 domain in the interval 4029-4087 (CPAHSHFTSCLPSCPPSCSNLDGSCVESNFKAPSVCKKGCICQPGYLLNNDKCVLRIQC). In terms of domain architecture, VWFC 18 spans 4088–4143 (GCKDTQGGLIPAGRTWISSDCTKSCSCMGGIIQCRDFQCPPGTYCKESNDSSRTCA). An N-linked (GlcNAc...) asparagine glycan is attached at N4136. One can recognise a TIL 19 domain in the interval 4149 to 4207 (CPAHSHYTNCLPACSRSCTDLDGHCEGTSPKVPSPCKEGCLCQPGYVVHNHKCVLQIHC). Residues 4208-4262 (GCKDAQGGFVPAGKTWISRGCTQSCACVGGAVQCHNFTCPTGTQCQNSSCSKITV) enclose the VWFC 19 domain. N-linked (GlcNAc...) asparagine glycosylation is found at N4243 and N4254. A TIL 20 domain is found at 4264-4322 (CPAHSQYTTCLPSCLPSCFDPEGLCGGASPRAPSTCREGCVCEADYVLREDKCVLRTQC). The VWFC 20 domain maps to 4323–4378 (GCKDAQGDLIPANKTWLTRGCAQKCTCKGGNIHCWNFKCPLGTECKDSVDGGSNCT). Residues N4335 and N4376 are each glycosylated (N-linked (GlcNAc...) asparagine). Residues 4384-4442 (CPAHSHHTYCLPSCIPSCSNVNDRCESTSLQRPSTCIEGCLCHSGFVFSKDKCVPRTQC) form the TIL 21 domain. Residues 4443-4498 (GCKDSQGTLIPAGKNWITTGCSQRCTCTGGLVQCHDFQCPSGAECQDIEDGNSNCV) enclose the VWFC 21 domain. The TIL 22 domain maps to 4504–4562 (CPAHSHYSKCLPPCQPSCSDPDGHCEGTSPEAPSTCEEGCVCEPDYVLSNDKCVPSSEC). In terms of domain architecture, VWFC 22 spans 4563 to 4618 (GCKDAHGVLIPESKTWVSRGCTKNCTCKGGTVQCHDFSCPTGSRCLDNNEGNSNCV). The N-linked (GlcNAc...) asparagine glycan is linked to N4586. The TIL 23 domain occupies 4624 to 4682 (CPAHSLYTNCLPSCLPSCSDPEGLCGGTSPEVPSTCKEGCICQSGYVLHKNKCMLRIHC). A VWFC 23 domain is found at 4683–4738 (DCKDFQGSLIKTGQTWISSGCSKICTCKGGFFQCQSYKCPSGTQCEESEDGSSNCV). The TIL 24 domain maps to 4744–4802 (CPANSLYTHCLPTCLPSCSNPDGRCEGTSHKAPSTCREGCVCQPGYLLNKDTCVHKNQC). Residues 4803–4858 (GCKDIRGNIIPAGNTWISSDCTQSCACTDGVIQCQNFVCPSGSHCQYNEDGSSDCA) form the VWFC 24 domain. The region spanning 4863 to 5038 (ERCTIFGDPY…SWEVKAQHAF (176 aa)) is the VWFD 4 domain. C4865 and C5001 form a disulfide bridge. Residue N5136 is glycosylated (N-linked (GlcNAc...) asparagine). Residues 5150 to 5203 (CPANTVYQRCMTPCPASCAKFVTPKVCEGPCVEGCASLPGYIYSDTQSLPVTHC) enclose the TIL 25 domain. One can recognise a VWFC 25 domain in the interval 5204 to 5258 (GCTADGIYYKLGDSFVTNDCSQHCTCASQGILLCEPYGCRAGESCMVANFTRGCF). N5252 carries an N-linked (GlcNAc...) asparagine glycan. The EGF-like domain occupies 5259–5295 (QDSPCLQNPCHNDGRCEEQGATFICHCDFGYGGEFCT). Cystine bridges form between C5263–C5274, C5268–C5283, and C5285–C5294. Residues 5311–5337 (LVAILPGVLVMVLVPVLLPRVYVYMAT) form a helical membrane-spanning segment. The Cytoplasmic segment spans residues 5338–5376 (RTTMGRRRMKRKEKKLLRQSRLRLEDADVPEPTFKATEF).

In terms of assembly, probably forms covalent oligomers. In terms of tissue distribution, in testis, primarily in haploid spermatids.

It localises to the cell membrane. Its function is as follows. Binds in a species-specific manner to the zona pellucida of the egg. May be involved in gamete recognition and/or signaling. The chain is Zonadhesin (Zan) from Mus musculus (Mouse).